We begin with the raw amino-acid sequence, 268 residues long: tRNA pseudouridine synthase A (268 aa).

Residue Asp-52 is the Nucleophile of the active site. Tyr-110 is a binding site for substrate.

It belongs to the tRNA pseudouridine synthase TruA family. In terms of assembly, homodimer.

The catalysed reaction is uridine(38/39/40) in tRNA = pseudouridine(38/39/40) in tRNA. Its function is as follows. Formation of pseudouridine at positions 38, 39 and 40 in the anticodon stem and loop of transfer RNAs. This is tRNA pseudouridine synthase A from Prochlorococcus marinus (strain MIT 9515).